The following is a 315-amino-acid chain: Kinetochore protein SPC25 homolog (315 aa).

N-acetylmethionine is present on M1. Residues 57–91 (TAQSQVELMNLKADLREAEDELVKVLAVKTRKEAR) adopt a coiled-coil conformation. The segment at 261 to 315 (APAISFSTDTNMSTPENKRSKVQVNRRQKRGSESPLLAPVSTSATRRSSRFKGKK) is disordered. Over residues 266–275 (FSTDTNMSTP) the composition is skewed to polar residues. The span at 280-289 (SKVQVNRRQK) shows a compositional bias: basic residues.

The protein belongs to the SPC25 family. As to quaternary structure, component of the NDC80 complex, which consists of NDC80, NUF2, SPC24 and SPC25.

It is found in the chromosome. It localises to the centromere. Its function is as follows. Acts as a component of the essential kinetochore-associated NDC80 complex, which is required for chromosome segregation and spindle checkpoint activity to ensure proper cell division. The sequence is that of Kinetochore protein SPC25 homolog from Arabidopsis thaliana (Mouse-ear cress).